The sequence spans 714 residues: Palmitoyltransferase ZDHHC5 (714 aa).

At 1-13 (MPAESAKRFKPSK) the chain is on the cytoplasmic side. A helical transmembrane segment spans residues 14 to 34 (YVPVSAAAIFLVGATTLFFAF). Residues 35 to 52 (TCPGLSLSVSPAVPVYNA) lie on the Extracellular side of the membrane. Residues 53 to 73 (VVFLFVLANFSMATFMDPGVF) traverse the membrane as a helical segment. The Cytoplasmic segment spans residues 74–148 (PRAEEDEDKE…NCIGRRNYRY (75 aa)). Phosphotyrosine is present on Tyr91. Positions 104-154 (KWCATCRFYRPPRCSHCSVCDNCVEEFDHHCPWVNNCIGRRNYRYFFLFLL) constitute a DHHC domain. Residue Cys134 is the S-palmitoyl cysteine intermediate of the active site. A helical membrane pass occupies residues 149 to 169 (FFLFLLSLTAHITGVFGFGLL). Over 170 to 191 (YVLYHMEELSGVRTAVTMAVMC) the chain is Extracellular. A helical transmembrane segment spans residues 192-212 (VAGLFFIPVAGLTGFHVVLVA). Residues 213–714 (RGRTTNEQVT…VGGTTYEISV (502 aa)) lie on the Cytoplasmic side of the membrane. Ser247 carries the phosphoserine modification. A disordered region spans residues 289 to 714 (GELRRTKSKG…VGGTTYEISV (426 aa)). Position 294 is a phosphothreonine (Thr294). Ser296 and Ser299 each carry phosphoserine. Residue Thr303 is modified to Phosphothreonine. Residue Ser345 is modified to Phosphoserine. Phosphothreonine is present on residues Thr348 and Thr350. Over residues 359–373 (SSSSASAAMPHSSSA) the composition is skewed to low complexity. Phosphoserine is present on residues Ser380, Ser398, Ser406, and Ser409. The segment covering 388-398 (AESSRQPSYRS) has biased composition (polar residues). Thr411 is modified (phosphothreonine). Low complexity predominate over residues 422 to 432 (SSGSRSSSLKS). A phosphoserine mark is found at Ser425, Ser429, and Ser432. The residue at position 436 (Thr436) is a Phosphothreonine. The segment covering 445 to 478 (SIRSEGTTSTSYKSLANQTRNGSLSYDSLLTPSD) has biased composition (polar residues). Ser529 and Ser554 each carry phosphoserine. Arg616 carries the post-translational modification Omega-N-methylarginine. Ser620 bears the Phosphoserine mark. Thr658 carries the post-translational modification Phosphothreonine. The span at 667 to 678 (TAYSKSNGQPKS) shows a compositional bias: polar residues. Over residues 683 to 692 (PPGPGQPPLS) the composition is skewed to pro residues. Position 693 is a phosphoserine (Ser693). Arg696 is subject to Omega-N-methylarginine.

Belongs to the DHHC palmitoyltransferase family. ERF2/ZDHHC9 subfamily. In terms of processing, phosphorylation regulates association with endocytic proteins and its subcellular localization. Phosphorylation by LYN during fatty acid uptake leads to inactivation of the activity. Autopalmitoylated. Palmitoylation of the C-terminal tail regulates stimulation-dependent plasma membrane motility.

The protein localises to the cell membrane. It carries out the reaction L-cysteinyl-[protein] + hexadecanoyl-CoA = S-hexadecanoyl-L-cysteinyl-[protein] + CoA. Its function is as follows. Palmitoyltransferase that catalyzes the addition of palmitate onto various protein substrates such as CTNND2, CD36, GSDMD, NLRP3, NOD1, NOD2, STAT3 and S1PR1 thus plays a role in various biological processes including cell adhesion, inflammation, fatty acid uptake, bacterial sensing or cardiac functions. Plays an important role in the regulation of synapse efficacy by mediating palmitoylation of delta-catenin/CTNND2, thereby increasing synaptic delivery and surface stabilization of alpha-amino-3-hydroxy-5-methyl-4-isoxazole propionic acid receptors (AMPARs). Under basal conditions, remains at the synaptic membrane through FYN-mediated phosphorylation that prevents association with endocytic proteins. Neuronal activity enhances the internalization and trafficking of DHHC5 from spines to dendritic shafts where it palmitoylates delta-catenin/CTNND2. Regulates cell adhesion at the plasma membrane by palmitoylating GOLGA7B and DSG2. Plays a role in innate immune response by mediating the palmitoylation of NOD1 and NOD2 and their proper recruitment to the bacterial entry site and phagosomes. Also participates in fatty acid uptake by palmitoylating CD36 and thereby targeting it to the plasma membrane. Upon binding of fatty acids to CD36, gets phosphorylated by LYN leading to inactivation and subsequent CD36 caveolar endocytosis. Controls oligodendrocyte development by catalyzing STAT3 palmitoylation. Acts as a regulator of inflammatory response by mediating palmitoylation of NLRP3 and GSDMD. Palmitoylates NLRP3 to promote inflammasome assembly and activation. Activates pyroptosis by catalyzing palmitoylation of gasdermin-D (GSDMD), thereby promoting membrane translocation and pore formation of GSDMD. This chain is Palmitoyltransferase ZDHHC5 (ZDHHC5), found in Bos taurus (Bovine).